A 248-amino-acid chain; its full sequence is Ribosomal RNA small subunit methyltransferase G (248 aa).

Residues 1 to 23 (MFHVKHVGPVEPAAGDPEVPPVA) form a disordered region. S-adenosyl-L-methionine contacts are provided by residues Gly-93, Leu-98, 143 to 144 (AE), and Arg-161. Residues 226-248 (VVSARRAKPPHPKSARTGKAGTR) are disordered. Basic residues predominate over residues 230–248 (RRAKPPHPKSARTGKAGTR).

It belongs to the methyltransferase superfamily. RNA methyltransferase RsmG family.

The protein resides in the cytoplasm. Specifically methylates the N7 position of guanine in position 518 of 16S rRNA. This Mycolicibacterium paratuberculosis (strain ATCC BAA-968 / K-10) (Mycobacterium paratuberculosis) protein is Ribosomal RNA small subunit methyltransferase G.